A 311-amino-acid chain; its full sequence is Formimidoylglutamase (311 aa).

H122, D151, H153, D155, C242, and D244 together coordinate Mn(2+).

The protein belongs to the arginase family. Mn(2+) is required as a cofactor.

It carries out the reaction N-formimidoyl-L-glutamate + H2O = formamide + L-glutamate. It functions in the pathway amino-acid degradation; L-histidine degradation into L-glutamate; L-glutamate from N-formimidoyl-L-glutamate (hydrolase route): step 1/1. Functionally, catalyzes the conversion of N-formimidoyl-L-glutamate to L-glutamate and formamide. The polypeptide is Formimidoylglutamase (Pseudomonas aeruginosa (strain UCBPP-PA14)).